Consider the following 100-residue polypeptide: MARVSREEVEHIANLSKLHISPEETTEMQDTLETILNFAQQIDTADTSSVEPTYHVLDLQNVLREDKAIPGIPQSLALKNAKETEDGQFKVPSIISGEDA.

This sequence belongs to the GatC family. In terms of assembly, heterotrimer of A, B and C subunits.

It carries out the reaction L-glutamyl-tRNA(Gln) + L-glutamine + ATP + H2O = L-glutaminyl-tRNA(Gln) + L-glutamate + ADP + phosphate + H(+). The enzyme catalyses L-aspartyl-tRNA(Asn) + L-glutamine + ATP + H2O = L-asparaginyl-tRNA(Asn) + L-glutamate + ADP + phosphate + 2 H(+). In terms of biological role, allows the formation of correctly charged Asn-tRNA(Asn) or Gln-tRNA(Gln) through the transamidation of misacylated Asp-tRNA(Asn) or Glu-tRNA(Gln) in organisms which lack either or both of asparaginyl-tRNA or glutaminyl-tRNA synthetases. The reaction takes place in the presence of glutamine and ATP through an activated phospho-Asp-tRNA(Asn) or phospho-Glu-tRNA(Gln). The chain is Aspartyl/glutamyl-tRNA(Asn/Gln) amidotransferase subunit C from Staphylococcus carnosus (strain TM300).